Consider the following 324-residue polypeptide: Beta-ketoacyl-[acyl-carrier-protein] synthase III (324 aa).

Residues C112 and H249 contribute to the active site. Residues 250-254 form an ACP-binding region; sequence QANRR. The active site involves N279.

The protein belongs to the thiolase-like superfamily. FabH family. Homodimer.

The protein resides in the cytoplasm. It catalyses the reaction malonyl-[ACP] + acetyl-CoA + H(+) = 3-oxobutanoyl-[ACP] + CO2 + CoA. It functions in the pathway lipid metabolism; fatty acid biosynthesis. Its function is as follows. Catalyzes the condensation reaction of fatty acid synthesis by the addition to an acyl acceptor of two carbons from malonyl-ACP. Catalyzes the first condensation reaction which initiates fatty acid synthesis and may therefore play a role in governing the total rate of fatty acid production. Possesses both acetoacetyl-ACP synthase and acetyl transacylase activities. Its substrate specificity determines the biosynthesis of branched-chain and/or straight-chain of fatty acids. This chain is Beta-ketoacyl-[acyl-carrier-protein] synthase III, found in Streptococcus equi subsp. equi (strain 4047).